The chain runs to 190 residues: Potassium-transporting ATPase KdpC subunit (190 aa).

Residues 15 to 35 (LWILTALIYPAIVLVIGQLVF) traverse the membrane as a helical segment.

The protein belongs to the KdpC family. As to quaternary structure, the system is composed of three essential subunits: KdpA, KdpB and KdpC.

Its subcellular location is the cell inner membrane. Functionally, part of the high-affinity ATP-driven potassium transport (or Kdp) system, which catalyzes the hydrolysis of ATP coupled with the electrogenic transport of potassium into the cytoplasm. This subunit acts as a catalytic chaperone that increases the ATP-binding affinity of the ATP-hydrolyzing subunit KdpB by the formation of a transient KdpB/KdpC/ATP ternary complex. This Synechocystis sp. (strain ATCC 27184 / PCC 6803 / Kazusa) protein is Potassium-transporting ATPase KdpC subunit.